A 497-amino-acid polypeptide reads, in one-letter code: ADP-dependent glucokinase (497 aa).

The first 22 residues, 1 to 22 (MALWRGSAYAGFLALAVGCVFL), serve as a signal peptide directing secretion. The 446-residue stretch at 52-497 (SPEGRLAAAW…LFYSEVHPHY (446 aa)) folds into the ADPK domain. 3 residues coordinate Mg(2+): glutamate 297, glutamate 328, and aspartate 481. Aspartate 481 functions as the Proton acceptor in the catalytic mechanism.

The protein belongs to the ADP-dependent glucokinase family. In terms of assembly, monomer. The cofactor is Mg(2+).

Its subcellular location is the secreted. The enzyme catalyses D-glucose + ADP = D-glucose 6-phosphate + AMP + H(+). Its pathway is carbohydrate degradation; glycolysis. Functionally, catalyzes the phosphorylation of D-glucose to D-glucose 6-phosphate using ADP as the phosphate donor. GDP and CDP can replace ADP, but with reduced efficiency. This Homo sapiens (Human) protein is ADP-dependent glucokinase (ADPGK).